A 90-amino-acid chain; its full sequence is UPF0335 protein RPA4190 (90 aa).

It belongs to the UPF0335 family.

In Rhodopseudomonas palustris (strain ATCC BAA-98 / CGA009), this protein is UPF0335 protein RPA4190.